The following is a 249-amino-acid chain: Proline-rich antigen (249 aa).

2 stretches are compositionally biased toward pro residues: residues 1-20 and 38-87; these read MTDQ…PPPG and YPPP…PPGP. The tract at residues 1-87 is disordered; sequence MTDQPPPSGS…GAYAPPPPGP (87 aa). The 1-1; approximate repeat unit spans residues 34-43; it reads LGSAYPPPTA. Residues 34-85 form a 5 X 10 AA tandem repeats of [PV]-G-G-S-Y-P-P-P-P-P region; it reads LGSAYPPPTAPPVGGSYPPPPPPGGSYPPPPPPGGSYPPPPPSTGAYAPPPP. Tandem repeats lie at residues 46–55, 56–65, and 66–75. A 1-5; approximate repeat occupies 76-85; the sequence is STGAYAPPPP. One can recognise an RDD domain in the interval 99-242; sequence FWVTRVLAYV…KRQTLADKIM (144 aa). Repeat copies occupy residues 101 to 123 and 134 to 156. Residues 101 to 156 form a 2 X 23 AA approximate repeats region; sequence VTRVLAYVIDNIPATVLLGIGMLIQTLTKQEACVTDITQYNVNQYCATQPTGIGML. Transmembrane regions (helical) follow at residues 104 to 124, 151 to 171, and 212 to 232; these read VLAY…GMLI, TGIG…YLVW, and LAHF…LWDS.

Belongs to the mycobacterial Pra family.

The protein localises to the cell membrane. This is Proline-rich antigen (ag36) from Mycobacterium leprae (strain TN).